A 505-amino-acid polypeptide reads, in one-letter code: Maturase K (505 aa).

The protein belongs to the intron maturase 2 family. MatK subfamily.

It is found in the plastid. It localises to the chloroplast. Its function is as follows. Usually encoded in the trnK tRNA gene intron. Probably assists in splicing its own and other chloroplast group II introns. The chain is Maturase K from Dioon edule (Virgin's palm).